Here is a 968-residue protein sequence, read N- to C-terminus: Alanine--tRNA ligase, cytoplasmic (968 aa).

M1 is modified (N-acetylmethionine). S3 bears the Phosphoserine mark. K19 carries the post-translational modification N6-acetyllysine. ATP-binding positions include R77, H95, W176, and 214 to 216 (IWN). L-alanine is bound by residues N216 and D239. G243 serves as a coordination point for ATP. Residues S399 and S555 each carry the phosphoserine modification. Residues H605, H609, C723, and H727 each contribute to the Zn(2+) site. The Nuclear localization signal signature appears at 750 to 763 (RRIVAVTGAEAQKA). K876 is modified (N6-acetyllysine). Residue K943 is modified to N6,N6,N6-trimethyllysine; alternate. K943 is subject to N6,N6-dimethyllysine; alternate. N6-methyllysine; alternate is present on K943.

This sequence belongs to the class-II aminoacyl-tRNA synthetase family. As to quaternary structure, monomer. Interacts with ANKRD16; the interaction is direct. Zn(2+) serves as cofactor. ISGylated. In terms of processing, methylation at 'Lys-943' by METTL21C.

It localises to the cytoplasm. It is found in the nucleus. The enzyme catalyses tRNA(Ala) + L-alanine + ATP = L-alanyl-tRNA(Ala) + AMP + diphosphate. The catalysed reaction is (S)-lactate + ATP + H(+) = (S)-lactoyl-AMP + diphosphate. It carries out the reaction (S)-lactoyl-AMP + L-lysyl-[protein] = N(6)-[(S)-lactoyl]-L-lysyl-[protein] + AMP + 2 H(+). The protein lactyltransferase activity is inhibited by beta-alanine. Catalyzes the attachment of alanine to tRNA(Ala) in a two-step reaction: alanine is first activated by ATP to form Ala-AMP and then transferred to the acceptor end of tRNA(Ala). Also edits incorrectly charged tRNA(Ala) via its editing domain. In presence of high levels of lactate, also acts as a protein lactyltransferase that mediates lactylation of lysine residues in target proteins, such as TEAD1, TP53/p53 and YAP1. Protein lactylation takes place in a two-step reaction: lactate is first activated by ATP to form lactate-AMP and then transferred to lysine residues of target proteins. Acts as an inhibitor of TP53/p53 activity by catalyzing lactylation of TP53/p53. Acts as a positive regulator of the Hippo pathway by mediating lactylation of TEAD1 and YAP1. This chain is Alanine--tRNA ligase, cytoplasmic (Aars1), found in Rattus norvegicus (Rat).